The chain runs to 337 residues: Ferrochelatase (337 aa).

H189 and E293 together coordinate Fe cation.

It belongs to the ferrochelatase family.

Its subcellular location is the cytoplasm. It carries out the reaction heme b + 2 H(+) = protoporphyrin IX + Fe(2+). It participates in porphyrin-containing compound metabolism; protoheme biosynthesis; protoheme from protoporphyrin-IX: step 1/1. Its function is as follows. Catalyzes the ferrous insertion into protoporphyrin IX. This chain is Ferrochelatase, found in Pseudomonas putida (strain W619).